The following is a 165-amino-acid chain: Glutamyl-tRNA(Gln) amidotransferase subunit F, mitochondrial (165 aa).

The N-terminal 19 residues, 1–19 (MKSILRSTTRNLITSSRRF), are a transit peptide targeting the mitochondrion.

This sequence belongs to the GatF family. Subunit of the heterotrimeric GatFAB amidotransferase (AdT) complex, composed of A, B and F subunits.

It is found in the mitochondrion inner membrane. It catalyses the reaction L-glutamyl-tRNA(Gln) + L-glutamine + ATP + H2O = L-glutaminyl-tRNA(Gln) + L-glutamate + ADP + phosphate + H(+). In terms of biological role, allows the formation of correctly charged Gln-tRNA(Gln) through the transamidation of misacylated Glu-tRNA(Gln) in the mitochondria. The reaction takes place in the presence of glutamine and ATP through an activated gamma-phospho-Glu-tRNA(Gln). Required for proper protein synthesis within the mitochondrion. The chain is Glutamyl-tRNA(Gln) amidotransferase subunit F, mitochondrial from Candida albicans (strain SC5314 / ATCC MYA-2876) (Yeast).